The chain runs to 273 residues: MTLDLQTTIENAWENRTNLSPVDATAEVREAVEQTIAALDLGRLRVAEKTEAGWIVHQWIKKAVLLSFRLQDNAIMGQAPMQFYDKVPLKFAEYGDTAFQHGGYRVVPPAVARRGAFIARNVVLMPSYVNIGAYVDEGTMVDTWATVGSCAQIGKNVHLSGGVGIGGVLEPLQANPTIIEDNCFIGARSEVVEGVVVEENSVLAMGVFLSQSTKIYDRATGKVTYGRVPSGSVVVPGSLPSEDGSHSLVCAVIVKRVDAQTRAKTSINDLLRA.

The protein belongs to the transferase hexapeptide repeat family.

The protein resides in the cytoplasm. The catalysed reaction is (S)-2,3,4,5-tetrahydrodipicolinate + succinyl-CoA + H2O = (S)-2-succinylamino-6-oxoheptanedioate + CoA. Its pathway is amino-acid biosynthesis; L-lysine biosynthesis via DAP pathway; LL-2,6-diaminopimelate from (S)-tetrahydrodipicolinate (succinylase route): step 1/3. This Bordetella petrii (strain ATCC BAA-461 / DSM 12804 / CCUG 43448) protein is 2,3,4,5-tetrahydropyridine-2,6-dicarboxylate N-succinyltransferase.